The chain runs to 1323 residues: Sister chromatid cohesion protein PDS5 homolog A-A (1323 aa).

An HEAT repeat occupies 385–421; that stretch reads FLVNDQLLGFVRERTLDKRWRVRKEAMMGLAQLYKKY. The segment at 1139 to 1323 is disordered; that stretch reads LNATGRRPYS…TAQRQIDLHR (185 aa). Residues 1153 to 1165 show a composition bias toward low complexity; it reads SEISNNVSINSES. Polar residues-rich tracts occupy residues 1166–1176 and 1210–1220; these read DASVANRQSSE and LDQTAPSNTGT. Over residues 1235–1246 the composition is skewed to basic and acidic residues; the sequence is NIRKESEEKKAD.

In terms of assembly, interacts with the cohesin complex. Binds chromatin in a cohesin-dependent manner.

The protein resides in the nucleus. In terms of biological role, may regulate sister chromatid cohesion during mitosis and couple it to DNA replication. The chain is Sister chromatid cohesion protein PDS5 homolog A-A (pds5a-a) from Xenopus laevis (African clawed frog).